A 437-amino-acid chain; its full sequence is GTPase Der (437 aa).

2 consecutive EngA-type G domains span residues P4–A167 and I176–R352. Residues G10–S17, D57–I61, N119–D122, G182–S189, D230–M234, and N295–D298 contribute to the GTP site. Positions K353–K437 constitute a KH-like domain.

It belongs to the TRAFAC class TrmE-Era-EngA-EngB-Septin-like GTPase superfamily. EngA (Der) GTPase family. Associates with the 50S ribosomal subunit.

Its function is as follows. GTPase that plays an essential role in the late steps of ribosome biogenesis. This Leuconostoc citreum (strain KM20) protein is GTPase Der.